We begin with the raw amino-acid sequence, 215 residues long: Pyridoxine/pyridoxamine 5'-phosphate oxidase (215 aa).

Residues 9–12 and K69 contribute to the substrate site; that span reads RRDY. FMN contacts are provided by residues 64-69, 79-80, K86, and Q108; these read RILLLK and FT. 3 residues coordinate substrate: Y126, R130, and S134. Residues 143–144 and W188 contribute to the FMN site; that span reads QS. 194 to 196 contacts substrate; sequence RLH. R198 provides a ligand contact to FMN.

The protein belongs to the pyridoxamine 5'-phosphate oxidase family. Homodimer. The cofactor is FMN.

It carries out the reaction pyridoxamine 5'-phosphate + O2 + H2O = pyridoxal 5'-phosphate + H2O2 + NH4(+). The enzyme catalyses pyridoxine 5'-phosphate + O2 = pyridoxal 5'-phosphate + H2O2. It participates in cofactor metabolism; pyridoxal 5'-phosphate salvage; pyridoxal 5'-phosphate from pyridoxamine 5'-phosphate: step 1/1. It functions in the pathway cofactor metabolism; pyridoxal 5'-phosphate salvage; pyridoxal 5'-phosphate from pyridoxine 5'-phosphate: step 1/1. Its function is as follows. Catalyzes the oxidation of either pyridoxine 5'-phosphate (PNP) or pyridoxamine 5'-phosphate (PMP) into pyridoxal 5'-phosphate (PLP). The sequence is that of Pyridoxine/pyridoxamine 5'-phosphate oxidase from Pseudomonas fluorescens (strain ATCC BAA-477 / NRRL B-23932 / Pf-5).